The primary structure comprises 59 residues: Large ribosomal subunit protein uL30 (59 aa).

This sequence belongs to the universal ribosomal protein uL30 family. In terms of assembly, part of the 50S ribosomal subunit.

The protein is Large ribosomal subunit protein uL30 of Clostridium kluyveri (strain ATCC 8527 / DSM 555 / NBRC 12016 / NCIMB 10680 / K1).